A 581-amino-acid chain; its full sequence is Nicotinic acid-CoA ligase pyr1 (581 aa).

Met-204–Lys-215 contributes to the AMP binding site. Positions Glu-477 to Lys-555 are AMP-binding.

The protein belongs to the ATP-dependent AMP-binding enzyme family.

The catalysed reaction is nicotinate + ATP + CoA = nicotinyl-CoA + AMP + diphosphate. It functions in the pathway secondary metabolite biosynthesis; terpenoid biosynthesis. In terms of biological role, nicotinic acid-CoA ligase; part of the gene cluster that mediates the biosynthesis of pyripyropene A, a specific human acyl-coenzyme A:cholesterol acyltransferase 2 inhibitor. The first step of the pathway is the synthesis of nicotinyl-CoA from nicotinic acid by the nicotinic acid-CoA ligase pyr1. Nicotinyl-CoA is then a substrate of polyketide synthase pyr2 to produce 4-hydroxy-6-(3-pyridinyl)-2H-pyran-2-one (HPPO) which is further prenylated by the polyprenyl transferase pyr6 to yield farnesyl-HPPO. The next steps consist of an epoxidation of farnesyl-HPPO to epoxyfarnesyl-HPPO by FAD-dependent monooxygenase pyr5 and a cyclization of the terpenoid portion by the terpene cyclase pyr4 to yield deacetyl-pyripyropene E. The 2 cytochrome P450 monooxygenases pyr3 and pyr9, and the 2 acetyltransferases pyr7 and pyr8 are involved in the conversion of deacetyl-pyripyropene E into pyripyropene A through several cycles of oxidation and acetylation steps. Pyr7 acetylates deacetyl-pyripyropene E to pyripyropene E which is oxidized to 11-deacetyl-pyripyropene O by pyr3, which is in turn acetylated into pyripyropene O by pyr8. Pyripyropene O is then oxidized to deacetyl-pyripyropene A by pyr9. Deacetyl-pyripyropene A is finally acetylated to pyripyropene A by pyr8. The sequence is that of Nicotinic acid-CoA ligase pyr1 from Aspergillus fumigatus (strain ATCC MYA-4609 / CBS 101355 / FGSC A1100 / Af293) (Neosartorya fumigata).